The primary structure comprises 383 residues: Protein phosphatase 2C homolog 4 (383 aa).

The region spanning 51-356 (SLGLCTARGD…DDITCLVVRL (306 aa)) is the PPM-type phosphatase domain. Mn(2+) is bound by residues D92, D308, and D347.

Belongs to the PP2C family. Monomer. It depends on Mg(2+) as a cofactor. The cofactor is Mn(2+).

The protein resides in the vacuole membrane. It catalyses the reaction O-phospho-L-seryl-[protein] + H2O = L-seryl-[protein] + phosphate. It carries out the reaction O-phospho-L-threonyl-[protein] + H2O = L-threonyl-[protein] + phosphate. Functionally, has a role in the regulation of vacuole fusion. This chain is Protein phosphatase 2C homolog 4 (ptc4), found in Schizosaccharomyces pombe (strain 972 / ATCC 24843) (Fission yeast).